Consider the following 150-residue polypeptide: Transcriptional repressor NrdR (150 aa).

The segment at 3 to 34 is a zinc-finger region; sequence CPFCGYEDTFVIDTREIEDQRVIRRRRECPNC. Residues 49–139 enclose the ATP-cone domain; sequence IMVIKKDGRR…VYQEFSSLEE (91 aa).

It belongs to the NrdR family. Requires Zn(2+) as cofactor.

Negatively regulates transcription of bacterial ribonucleotide reductase nrd genes and operons by binding to NrdR-boxes. This Dictyoglomus thermophilum (strain ATCC 35947 / DSM 3960 / H-6-12) protein is Transcriptional repressor NrdR.